A 343-amino-acid chain; its full sequence is UDP-3-O-acylglucosamine N-acyltransferase (343 aa).

The active-site Proton acceptor is H237.

The protein belongs to the transferase hexapeptide repeat family. LpxD subfamily. In terms of assembly, homotrimer.

It catalyses the reaction a UDP-3-O-[(3R)-3-hydroxyacyl]-alpha-D-glucosamine + a (3R)-hydroxyacyl-[ACP] = a UDP-2-N,3-O-bis[(3R)-3-hydroxyacyl]-alpha-D-glucosamine + holo-[ACP] + H(+). It participates in bacterial outer membrane biogenesis; LPS lipid A biosynthesis. Catalyzes the N-acylation of UDP-3-O-acylglucosamine using 3-hydroxyacyl-ACP as the acyl donor. Is involved in the biosynthesis of lipid A, a phosphorylated glycolipid that anchors the lipopolysaccharide to the outer membrane of the cell. In Synechococcus sp. (strain JA-3-3Ab) (Cyanobacteria bacterium Yellowstone A-Prime), this protein is UDP-3-O-acylglucosamine N-acyltransferase.